Here is a 139-residue protein sequence, read N- to C-terminus: MATNRRVSRVAELIKREVSQMLLNGIKDDRVGTGMVSVTDVDVSGDLQHAKIYVSIYGTDEAKVETMAGLKSATGYVRSELGARVRLRRTPEVIFLEDRSIERGNKVLALLSQLNHDRPPENLLAVEDNTDEDDESFSE.

A disordered region spans residues 120 to 139; that stretch reads PENLLAVEDNTDEDDESFSE. The span at 128 to 139 shows a compositional bias: acidic residues; that stretch reads DNTDEDDESFSE.

This sequence belongs to the RbfA family. In terms of assembly, monomer. Binds 30S ribosomal subunits, but not 50S ribosomal subunits or 70S ribosomes.

It is found in the cytoplasm. Its function is as follows. One of several proteins that assist in the late maturation steps of the functional core of the 30S ribosomal subunit. Associates with free 30S ribosomal subunits (but not with 30S subunits that are part of 70S ribosomes or polysomes). Required for efficient processing of 16S rRNA. May interact with the 5'-terminal helix region of 16S rRNA. The polypeptide is Ribosome-binding factor A (Nostoc punctiforme (strain ATCC 29133 / PCC 73102)).